A 400-amino-acid chain; its full sequence is Enoyl-[acyl-carrier-protein] reductase [NADH] (400 aa).

NAD(+) is bound by residues 48-53, 74-75, 111-112, and 139-140; these read GASTGY, FE, DA, and LA. Residue tyrosine 225 participates in substrate binding. Tyrosine 235 serves as the catalytic Proton donor. NAD(+) contacts are provided by residues lysine 244 and 273-275; that span reads VVT.

It belongs to the TER reductase family. Monomer.

It catalyses the reaction a 2,3-saturated acyl-[ACP] + NAD(+) = a (2E)-enoyl-[ACP] + NADH + H(+). It participates in lipid metabolism; fatty acid biosynthesis. Functionally, involved in the final reduction of the elongation cycle of fatty acid synthesis (FAS II). Catalyzes the reduction of a carbon-carbon double bond in an enoyl moiety that is covalently linked to an acyl carrier protein (ACP). This Burkholderia ambifaria (strain MC40-6) protein is Enoyl-[acyl-carrier-protein] reductase [NADH].